Consider the following 301-residue polypeptide: Probable alpha-L-glutamate ligase 1 (301 aa).

In terms of domain architecture, ATP-grasp spans Leu104–Glu287. ATP contacts are provided by residues Lys141, Glu178–Tyr179, Asp187, and Arg211–Asn213. Mg(2+) is bound by residues Asp248, Glu260, and Asn262. Residues Asp248, Glu260, and Asn262 each coordinate Mn(2+).

Belongs to the RimK family. Requires Mg(2+) as cofactor. It depends on Mn(2+) as a cofactor.

The chain is Probable alpha-L-glutamate ligase 1 from Shewanella baltica (strain OS155 / ATCC BAA-1091).